The chain runs to 172 residues: Protein GrpE (172 aa).

The interval 1-23 is disordered; that stretch reads MNQDHPECDSEELTQNSPETDPL.

It belongs to the GrpE family. Homodimer.

It localises to the cytoplasm. Its function is as follows. Participates actively in the response to hyperosmotic and heat shock by preventing the aggregation of stress-denatured proteins, in association with DnaK and GrpE. It is the nucleotide exchange factor for DnaK and may function as a thermosensor. Unfolded proteins bind initially to DnaJ; upon interaction with the DnaJ-bound protein, DnaK hydrolyzes its bound ATP, resulting in the formation of a stable complex. GrpE releases ADP from DnaK; ATP binding to DnaK triggers the release of the substrate protein, thus completing the reaction cycle. Several rounds of ATP-dependent interactions between DnaJ, DnaK and GrpE are required for fully efficient folding. This Xylella fastidiosa (strain M23) protein is Protein GrpE.